The chain runs to 130 residues: Holo-[acyl-carrier-protein] synthase (130 aa).

2 residues coordinate Mg(2+): aspartate 9 and glutamate 58.

Belongs to the P-Pant transferase superfamily. AcpS family. Mg(2+) serves as cofactor.

It localises to the cytoplasm. It carries out the reaction apo-[ACP] + CoA = holo-[ACP] + adenosine 3',5'-bisphosphate + H(+). Functionally, transfers the 4'-phosphopantetheine moiety from coenzyme A to a Ser of acyl-carrier-protein. The polypeptide is Holo-[acyl-carrier-protein] synthase (Mycobacterium marinum (strain ATCC BAA-535 / M)).